Consider the following 271-residue polypeptide: uncharacterized protein (271 aa).

The AB hydrolase-1 domain maps to Pro-24 to Pro-124.

The protein belongs to the AB hydrolase superfamily.

This is an uncharacterized protein from Bacillus subtilis (strain 168).